The sequence spans 226 residues: Putative N-acetylmannosamine-6-phosphate 2-epimerase 1 (226 aa).

This sequence belongs to the NanE family.

The enzyme catalyses an N-acyl-D-glucosamine 6-phosphate = an N-acyl-D-mannosamine 6-phosphate. It participates in amino-sugar metabolism; N-acetylneuraminate degradation; D-fructose 6-phosphate from N-acetylneuraminate: step 3/5. Functionally, converts N-acetylmannosamine-6-phosphate (ManNAc-6-P) to N-acetylglucosamine-6-phosphate (GlcNAc-6-P). This Salmonella paratyphi A (strain ATCC 9150 / SARB42) protein is Putative N-acetylmannosamine-6-phosphate 2-epimerase 1.